The primary structure comprises 485 residues: Arginine biosynthesis bifunctional protein ArgJ, mitochondrial (485 aa).

Positions 185, 214, 225, and 315 each coordinate substrate. The active-site Nucleophile is the Thr-225.

This sequence belongs to the ArgJ family. As to quaternary structure, heterodimer of an alpha and a beta chain. In terms of processing, the alpha and beta chains are autoproteolytically processed from a single precursor protein within the mitochondrion.

The protein resides in the mitochondrion matrix. The enzyme catalyses N(2)-acetyl-L-ornithine + L-glutamate = N-acetyl-L-glutamate + L-ornithine. It carries out the reaction L-glutamate + acetyl-CoA = N-acetyl-L-glutamate + CoA + H(+). It participates in amino-acid biosynthesis; L-arginine biosynthesis; L-ornithine and N-acetyl-L-glutamate from L-glutamate and N(2)-acetyl-L-ornithine (cyclic): step 1/1. The protein operates within amino-acid biosynthesis; L-arginine biosynthesis; N(2)-acetyl-L-ornithine from L-glutamate: step 1/4. Functionally, catalyzes two activities which are involved in the cyclic version of arginine biosynthesis: the synthesis of acetylglutamate from glutamate and acetyl-CoA, and of ornithine by transacetylation between acetylornithine and glutamate. This chain is Arginine biosynthesis bifunctional protein ArgJ, mitochondrial, found in Penicillium rubens (strain ATCC 28089 / DSM 1075 / NRRL 1951 / Wisconsin 54-1255) (Penicillium chrysogenum).